A 222-amino-acid polypeptide reads, in one-letter code: MHINIAWQDVDTVLLDMDGTLLDLAFDNYFWQKLVPETWGAKNGVTPQEAMEYMRQQYHDVQHTLNWYCLDYWSEQLGLDICAMTTEMGPRAVLREDTIPFLEALKASGKQRILLTNAHPHNLAVKLEHTGLDAHLDLLLSTHTFGYPKEDQRLWHAVAEATGLKAERTLFIDDSEAILDAAAQFGIRYCLGVTNPDSGIAEKQYQRHPSLNDYRRLIPSLM.

Asp9 acts as the Nucleophile in catalysis. Mg(2+) contacts are provided by Asp9 and Asp11. Residues 9–11 (DVD) and Lys149 contribute to the substrate site. Asp174 lines the Mg(2+) pocket.

This sequence belongs to the HAD-like hydrolase superfamily. Requires Mg(2+) as cofactor. The cofactor is Mn(2+). Co(2+) serves as cofactor. Zn(2+) is required as a cofactor.

The enzyme catalyses a ribonucleoside 5'-phosphate + H2O = a ribonucleoside + phosphate. Functionally, catalyzes the dephosphorylation of different purine nucleotides (GMP and IMP). Also hydrolyzes flavin mononucleotide (FMN). This is GMP/IMP nucleotidase YrfG (yrfG) from Escherichia coli (strain K12).